The following is an 818-amino-acid chain: MTDTRRRVKVYTLNEDRQWDDRGTGHVSSGYVERFKGTSLLVRAESDGSLLLESKINPNTAYQKQQDTLIVWSEAENYDLALSFQEKAGCDEIWEKICQVQGKDPSVDITQDVVDESEDERFDDMSSPGLELPPCELNRLEDLAELVASSLPSPLRREKLALAVENEGYIRKLLDLFHVCEDLENREGLHHIYEIIKGIFLLNRTALFEVMFSDECIMDVIGCLEFDPALPQPRRHREFLTKTAHFKEVIPISDPELRQKIHQTYRVQYIQDMVLPTPSVFEENMLSTLHSFIFFNKVEIVGMLQDDEKFLTDLFAQLTDEATDDDKRHELVNFLKEFCAFSQTLQPQNRDAFFKTLSNMGILPALEVILGMDDVQVRAAATDIFSYLVEYNPSMVREFVMQESQQNDDDILLINLIIEHMICDTDPELGGAVQLISLLRTLVDPENMLATANKTEKTEFLSFFYKHCMHVLSAPLLANTTEDKPSKDDFQTSQLLALILELLTFCVEHHTYHIKNYIINKDILRRVLVLTASKHAFLALCALRFMRRIIGLKDEFYNRYIMRNFLFEPVIKAFLNNGSRYNLMNSAIIEMFEYVRVEDVKSLTAHIVENYWKALEDVDYVQTFKGLKLRYEQQRERQDNPKLDSMRSILRNHRFRRDARTLEDEEEMWFNTDEDDLEDGETVVRTSDKIKTEEDLMEPISKFMERKKLKEPEDKEILAKSSFSGRQNPSFKLAFSGSTKTSLSSPPPSASLSPGSPGSPGSPGSGARSSPSNTSVTTKGGLVGLVDYPDDDEEEEDDDDEESKEEPLPPSKKSRLSS.

Residues M1–V100 enclose the WH1 domain. Positions L718 to S818 are disordered. Residues S721 to S730 are compositionally biased toward polar residues. The span at S736–S756 shows a compositional bias: low complexity. The span at Y788–K804 shows a compositional bias: acidic residues.

The protein belongs to the SMEK family. As to quaternary structure, serine/threonine-protein phosphatase 4 (PP4) occurs in different assemblies of the catalytic and one or more regulatory subunits.

Functionally, regulatory subunit of serine/threonine-protein phosphatase 4. The chain is Serine/threonine-protein phosphatase 4 regulatory subunit 3 (smek1) from Tetraodon nigroviridis (Spotted green pufferfish).